The sequence spans 290 residues: MSFVAYEELIKEGDTAILSLGHGSMVAVRVQRGAQTQTRHGVLRHSVDLIGRPFGSKVTCSRGGWVYVLHPTPELWTVNLPHRTQILYSTDIALITMMLELRPGSVVCESGTGSGSVSHAIIRSIAPTGHLHTVEFHQQRADKAREEFQQHRVSQWVTVHTQDVCRSGFGVVHVADAVFLDIPSPWEAVGHAWDALKVEGGRFCSFSPCIEQVQRTCQALAAHGFTELSTLEVLPQVYNVRTVSLPLPDLGADDLEGNVGSDATPFRSGTPMKETVGHTGYLTFATKTPG.

Ser2 carries the N-acetylserine modification. Substrate stretches follow at residues Leu20–His22, Gln35–Val42, Gly64–Trp65, Gln85–Ser89, and Ser110–Val117. Residues Leu87, Ser114–Ser116, Glu135, Arg140, Asp163–Val164, and Asp181 contribute to the S-adenosyl-L-methionine site. Substrate stretches follow at residues Leu180–Pro183 and Ser205–Gln212. Position 279 (Thr279) interacts with substrate.

The protein belongs to the class I-like SAM-binding methyltransferase superfamily. TRM61 family. In terms of assembly, heterotetramer; composed of two copies of TRMT6 and two copies of TRMT61A.

Its subcellular location is the nucleus. The catalysed reaction is adenosine(58) in tRNA + S-adenosyl-L-methionine = N(1)-methyladenosine(58) in tRNA + S-adenosyl-L-homocysteine + H(+). It carries out the reaction an adenosine in mRNA + S-adenosyl-L-methionine = an N(1)-methyladenosine in mRNA + S-adenosyl-L-homocysteine + H(+). Its function is as follows. Catalytic subunit of tRNA (adenine-N(1)-)-methyltransferase, which catalyzes the formation of N(1)-methyladenine at position 58 (m1A58) in initiator methionyl-tRNA. Catalytic subunit of mRNA N(1)-methyltransferase complex, which mediates methylation of adenosine residues at the N(1) position of a small subset of mRNAs: N(1) methylation takes place in tRNA T-loop-like structures of mRNAs and is only present at low stoichiometries. In Rattus norvegicus (Rat), this protein is tRNA (adenine(58)-N(1))-methyltransferase catalytic subunit TRMT61A (Trmt61a).